We begin with the raw amino-acid sequence, 197 residues long: Mediator of RNA polymerase II transcription subunit 10 (197 aa).

Residues 1-39 (MSSTAGTRRPRQITPTSPSPSPEPQPGATNGSSSTINVA) are disordered. A compositionally biased stretch (polar residues) spans 27–37 (GATNGSSSTIN).

Belongs to the Mediator complex subunit 10 family. As to quaternary structure, component of the Mediator complex.

It is found in the nucleus. Its function is as follows. Component of the Mediator complex, a coactivator involved in the regulated transcription of nearly all RNA polymerase II-dependent genes. Mediator functions as a bridge to convey information from gene-specific regulatory proteins to the basal RNA polymerase II transcription machinery. Mediator is recruited to promoters by direct interactions with regulatory proteins and serves as a scaffold for the assembly of a functional preinitiation complex with RNA polymerase II and the general transcription factors. The polypeptide is Mediator of RNA polymerase II transcription subunit 10 (NUT2) (Mycosarcoma maydis (Corn smut fungus)).